We begin with the raw amino-acid sequence, 637 residues long: Threonine--tRNA ligase (637 aa).

In terms of domain architecture, TGS spans 1 to 61 (MITITLPDSS…ATDAAVRLIT (61 aa)). The interval 238 to 528 (DHRKLGAELD…LIEHFAGKFP (291 aa)) is catalytic. 3 residues coordinate Zn(2+): Cys329, His380, and His505.

Belongs to the class-II aminoacyl-tRNA synthetase family. In terms of assembly, homodimer. Zn(2+) serves as cofactor.

The protein localises to the cytoplasm. It carries out the reaction tRNA(Thr) + L-threonine + ATP = L-threonyl-tRNA(Thr) + AMP + diphosphate + H(+). Catalyzes the attachment of threonine to tRNA(Thr) in a two-step reaction: L-threonine is first activated by ATP to form Thr-AMP and then transferred to the acceptor end of tRNA(Thr). Also edits incorrectly charged L-seryl-tRNA(Thr). The chain is Threonine--tRNA ligase from Desulfosudis oleivorans (strain DSM 6200 / JCM 39069 / Hxd3) (Desulfococcus oleovorans).